A 229-amino-acid polypeptide reads, in one-letter code: Enolase-phosphatase E1 (229 aa).

This sequence belongs to the HAD-like hydrolase superfamily. MasA/MtnC family. As to quaternary structure, monomer. It depends on Mg(2+) as a cofactor.

It catalyses the reaction 5-methylsulfanyl-2,3-dioxopentyl phosphate + H2O = 1,2-dihydroxy-5-(methylsulfanyl)pent-1-en-3-one + phosphate. The protein operates within amino-acid biosynthesis; L-methionine biosynthesis via salvage pathway; L-methionine from S-methyl-5-thio-alpha-D-ribose 1-phosphate: step 3/6. It participates in amino-acid biosynthesis; L-methionine biosynthesis via salvage pathway; L-methionine from S-methyl-5-thio-alpha-D-ribose 1-phosphate: step 4/6. Bifunctional enzyme that catalyzes the enolization of 2,3-diketo-5-methylthiopentyl-1-phosphate (DK-MTP-1-P) into the intermediate 2-hydroxy-3-keto-5-methylthiopentenyl-1-phosphate (HK-MTPenyl-1-P), which is then dephosphorylated to form the acireductone 1,2-dihydroxy-3-keto-5-methylthiopentene (DHK-MTPene). In Serratia proteamaculans (strain 568), this protein is Enolase-phosphatase E1.